Consider the following 140-residue polypeptide: Putative transmembrane protein 49 (140 aa).

A run of 2 helical transmembrane segments spans residues 23 to 43 (LIMS…IGGV) and 93 to 110 (IAVH…RYMY).

It localises to the host membrane. The protein is Putative transmembrane protein 49 (SIFV0049) of Saccharolobus islandicus (Sulfolobus islandicus).